We begin with the raw amino-acid sequence, 138 residues long: Protein NrdI (138 aa).

The protein belongs to the NrdI family.

Functionally, probably involved in ribonucleotide reductase function. The chain is Protein NrdI from Mycobacterium leprae (strain TN).